A 231-amino-acid chain; its full sequence is NADH-ubiquinone oxidoreductase chain 4 (231 aa).

A run of 7 helical transmembrane segments spans residues P1–I21, L34–L54, S61–I80, W84–L106, I118–L138, L156–S176, and L211–I231.

It belongs to the complex I subunit 4 family.

The protein resides in the mitochondrion membrane. The enzyme catalyses a ubiquinone + NADH + 5 H(+)(in) = a ubiquinol + NAD(+) + 4 H(+)(out). Functionally, core subunit of the mitochondrial membrane respiratory chain NADH dehydrogenase (Complex I) that is believed to belong to the minimal assembly required for catalysis. Complex I functions in the transfer of electrons from NADH to the respiratory chain. The immediate electron acceptor for the enzyme is believed to be ubiquinone. The polypeptide is NADH-ubiquinone oxidoreductase chain 4 (MT-ND4) (Hypnale hypnale (Merrem's hump-nosed viper)).